Consider the following 377-residue polypeptide: Chaperone protein DnaJ (377 aa).

Positions Glu5 to Gly69 constitute a J domain. The CR-type zinc-finger motif lies at Gly133–Thr215. Zn(2+) contacts are provided by Cys146, Cys149, Cys163, Cys166, Cys189, Cys192, Cys203, and Cys206. CXXCXGXG motif repeat units follow at residues Cys146 to Gly153, Cys163 to Gly170, Cys189 to Gly196, and Cys203 to Gly210.

This sequence belongs to the DnaJ family. In terms of assembly, homodimer. It depends on Zn(2+) as a cofactor.

The protein resides in the cytoplasm. Its function is as follows. Participates actively in the response to hyperosmotic and heat shock by preventing the aggregation of stress-denatured proteins and by disaggregating proteins, also in an autonomous, DnaK-independent fashion. Unfolded proteins bind initially to DnaJ; upon interaction with the DnaJ-bound protein, DnaK hydrolyzes its bound ATP, resulting in the formation of a stable complex. GrpE releases ADP from DnaK; ATP binding to DnaK triggers the release of the substrate protein, thus completing the reaction cycle. Several rounds of ATP-dependent interactions between DnaJ, DnaK and GrpE are required for fully efficient folding. Also involved, together with DnaK and GrpE, in the DNA replication of plasmids through activation of initiation proteins. In Streptococcus uberis (strain ATCC BAA-854 / 0140J), this protein is Chaperone protein DnaJ.